A 1548-amino-acid chain; its full sequence is MKPGSDDFLPPPECPVFEPSWAEFRDPLGYIAKIRPIAEKSGICKIRPPADWQPPFAVEVDNFRFTPRIQRLNELEAQTRVKLNYLDQIAKFWEIQGSSLKIPNVERKILDLYSLNKIVMEEGGYEAICKDRRWARVAQRLNYPSGKNIGSLLRSHYERIIYPYEIFQSGANLVQCNTDPFDSEERDKEYKPHSIPLRQSVQPSKFSCYSRRGKRLQPEPEPTEEDIEKNPELKKLQIYGAGPKMIGLGLKAKEKTLRKKDSKQPDKEEVTCPATIVVKGEASEFGKVTSAFSDKNLNHSFEPCMKMTMQLRNNHSSTQFMNSYVCRICSRGDEVDKFLLCDGCSDNYHIFCLLPPLSEVPKGVWRCPKCILAECKSPPEAFGFEQATQEYTLQSFGEMADSFKADYFNMPVHMVPTEVVEKEFWRLVSSIEEDVTVEYGADIHSKEFGSGFPVNNSKWDLSPEEKEYAACGWNLNVMPVLDQSVLCHINADISGMKVPWLYVGMVFSAFCWHIEDHWSYSINYLHWGEPKTWYGVPSLAAEHLEDVMKRLTPELFDSQPDLLHQLVTLMNPNTLMSHGVPVVRTNQCAGEFVITFPRAYHSGFNQGYNFAEAVNFCTADWLPVGRQCIEHYRRLRRYCVFSHEELICKMAAFPEKLDLNLAVAVHKEMFIMVQEERRLRKTLLEKGITEAEREAFELLPDDERQCIKCKTTCFLSALACYDCPDSLVCLSHINDLCKCSRNRQYLRYRYTLDELPAMLQKLKIRAESFDNWANKVQAALEVEDGRKRSFEELRALESEARDRRFPNSELLQRLKKCLTEAEACISQVLGLISNSEDRLQTPQITLTELQLLLKQMGTLPCTMHQIDEVKDVLQQVESYQIETREALTSLPYSLEILQSLMEKGQQLRVEVPEAHQLEELLEQAQWLDQVKQALAPSGQRHSLVIMKKLLVMGTKVASSPSVNKARAELQELLTIAECWEEKAHFCLKASQKHSPATLEVIIREAENIPVYLPNIQSLKEALTKAQAWIADVNEIQNGDHYPCLDDLEGLVAVGRDLPVELEELRQLENQVLTAHSWKEKASKTFLKKNSCYTLLEVLCPCADAGSVSTKRSRWIEKEMGLYKYDTELLGLSAQDLRDPGSVIMAFKEGEEKEKEGILHLRHINSAKPSPMSSSMNASATSICICGQVCAGVESLQCDLCHDWFHGQCVTVPHLLSSVRASHTSSQLLAWWEWDTKFLCPLCMRSRRPRLETILSLLVGLQRLSVRLPEGEALQCLTERAIGWQGRARQALASEDVTALLKQLEKSRQQLQDELRHKKPPTLPSGFAFDCLTENSGKDILKEEEELVLNEERIKSSEKIVPKESSCKGDKELLPSLLSQLTGPVLELPEATRAPLEELMMEGDLLEVTLDENYSIWQLLQAGQNPNLERIHTLLELEKPENPGNWSEEQTPERRRQRRQKVVLSRKGEDFTQKELESKRVKSSRIKPKEEKFQKPILGDNVLYTHHTEHTNILKEHINSVQGKDPSPSSSFPSLTPLLHLSYFHQQKL.

The JmjN domain maps to 14 to 55 (CPVFEPSWAEFRDPLGYIAKIRPIAEKSGICKIRPPADWQPP). The ARID domain maps to 79 to 169 (TRVKLNYLDQ…IIYPYEIFQS (91 aa)). Glycyl lysine isopeptide (Lys-Gly) (interchain with G-Cter in SUMO2) cross-links involve residues K205, K229, K244, and K279. The tract at residues 208 to 229 (CYSRRGKRLQPEPEPTEEDIEK) is disordered. Residues S300 and S316 each carry the phosphoserine modification. Residues 325 to 371 (VCRICSRGDEVDKFLLCDGCSDNYHIFCLLPPLSEVPKGVWRCPKCI) form a PHD-type 1 zinc finger. Y439 is a binding site for 2-oxoglutarate. The region spanning 467 to 633 (EYAACGWNLN…VGRQCIEHYR (167 aa)) is the JmjC domain. Residues H513 and E515 each contribute to the Fe cation site. 2-oxoglutarate contacts are provided by S521, N523, and K531. Residue H601 participates in Fe cation binding. The C5HC2 zinc finger occupies 706-758 (CIKCKTTCFLSALACYDCPDSLVCLSHINDLCKCSRNRQYLRYRYTLDELPAM). Phosphoserine occurs at positions 889 and 893. K1123 is covalently cross-linked (Glycyl lysine isopeptide (Lys-Gly) (interchain with G-Cter in SUMO2)). The PHD-type 2 zinc-finger motif lies at 1182 to 1243 (ICICGQVCAG…DTKFLCPLCM (62 aa)). A Phosphoserine modification is found at S1355. The interval 1438 to 1468 (KPENPGNWSEEQTPERRRQRRQKVVLSRKGE) is disordered.

It belongs to the JARID1 histone demethylase family. As to quaternary structure, interacts withPCGF6, MSH5, ZMYND8, AR. It depends on L-ascorbate as a cofactor. Fe(2+) is required as a cofactor.

Its subcellular location is the nucleus. The enzyme catalyses N(6),N(6),N(6)-trimethyl-L-lysyl(4)-[histone H3] + 3 2-oxoglutarate + 3 O2 = L-lysyl(4)-[histone H3] + 3 formaldehyde + 3 succinate + 3 CO2. Functionally, histone demethylase that specifically demethylates 'Lys-4' of histone H3, thereby playing a central role in histone code. Does not demethylate histone H3 'Lys-9', H3 'Lys-27', H3 'Lys-36', H3 'Lys-79' or H4 'Lys-20'. Demethylates trimethylated and dimethylated but not monomethylated H3 'Lys-4'. May play a role in spermatogenesis. Involved in transcriptional repression of diverse metastasis-associated genes; in this function seems to cooperate with ZMYND8. Suppresses prostate cancer cell invasion. Regulates androgen receptor (AR) transcriptional activity by demethylating H3K4me3 active transcription marks. The sequence is that of Lysine-specific demethylase 5D (Kdm5d) from Mus musculus (Mouse).